Here is a 302-residue protein sequence, read N- to C-terminus: Epoxyqueuosine reductase (302 aa).

Catalysis depends on Asp128, which acts as the Proton donor. The 4Fe-4S ferredoxin-type 1 domain maps to 170 to 202 (LPLQADGPIRDYCGTCTACIDACPTDAITPYEV). Residues Cys182, Cys185, Cys188, Cys192, Cys207, Cys234, Cys237, and Cys241 each coordinate [4Fe-4S] cluster. The 4Fe-4S ferredoxin-type 2 domain maps to 221 to 251 (NEFKGKMENWIFGCDICQDVCPWNSFARPHS).

Belongs to the QueG family. As to quaternary structure, monomer. Cob(II)alamin serves as cofactor. The cofactor is [4Fe-4S] cluster.

It is found in the cytoplasm. The catalysed reaction is epoxyqueuosine(34) in tRNA + AH2 = queuosine(34) in tRNA + A + H2O. Its pathway is tRNA modification; tRNA-queuosine biosynthesis. Catalyzes the conversion of epoxyqueuosine (oQ) to queuosine (Q), which is a hypermodified base found in the wobble positions of tRNA(Asp), tRNA(Asn), tRNA(His) and tRNA(Tyr). This is Epoxyqueuosine reductase from Leadbetterella byssophila (strain DSM 17132 / JCM 16389 / KACC 11308 / NBRC 106382 / 4M15).